A 446-amino-acid polypeptide reads, in one-letter code: Maltoporin (446 aa).

The signal sequence occupies residues 1-25; that stretch reads MMITLRKLPLAVAVAAGVMSAQAMA.

This sequence belongs to the porin LamB (TC 1.B.3) family. Homotrimer formed of three 18-stranded antiparallel beta-barrels, containing three independent channels.

The protein resides in the cell outer membrane. It carries out the reaction beta-maltose(in) = beta-maltose(out). Its function is as follows. Involved in the transport of maltose and maltodextrins. In Escherichia coli O8 (strain IAI1), this protein is Maltoporin.